Consider the following 387-residue polypeptide: Anhydro-N-acetylmuramic acid kinase (387 aa).

An ATP-binding site is contributed by 9-16 (GTSVDGID).

This sequence belongs to the anhydro-N-acetylmuramic acid kinase family.

It carries out the reaction 1,6-anhydro-N-acetyl-beta-muramate + ATP + H2O = N-acetyl-D-muramate 6-phosphate + ADP + H(+). It functions in the pathway amino-sugar metabolism; 1,6-anhydro-N-acetylmuramate degradation. It participates in cell wall biogenesis; peptidoglycan recycling. Functionally, catalyzes the specific phosphorylation of 1,6-anhydro-N-acetylmuramic acid (anhMurNAc) with the simultaneous cleavage of the 1,6-anhydro ring, generating MurNAc-6-P. Is required for the utilization of anhMurNAc either imported from the medium or derived from its own cell wall murein, and thus plays a role in cell wall recycling. The sequence is that of Anhydro-N-acetylmuramic acid kinase from Synechocystis sp. (strain ATCC 27184 / PCC 6803 / Kazusa).